The sequence spans 151 residues: Nucleoside diphosphate kinase (151 aa).

Residues lysine 11, phenylalanine 59, arginine 87, threonine 93, arginine 104, and asparagine 114 each contribute to the ATP site. Catalysis depends on histidine 117, which acts as the Pros-phosphohistidine intermediate.

It belongs to the NDK family. As to quaternary structure, homotetramer. The cofactor is Mg(2+).

It is found in the cytoplasm. It catalyses the reaction a 2'-deoxyribonucleoside 5'-diphosphate + ATP = a 2'-deoxyribonucleoside 5'-triphosphate + ADP. It carries out the reaction a ribonucleoside 5'-diphosphate + ATP = a ribonucleoside 5'-triphosphate + ADP. Major role in the synthesis of nucleoside triphosphates other than ATP. The ATP gamma phosphate is transferred to the NDP beta phosphate via a ping-pong mechanism, using a phosphorylated active-site intermediate. The sequence is that of Nucleoside diphosphate kinase from Prochlorococcus marinus (strain NATL2A).